The following is a 765-amino-acid chain: Amine oxidase [copper-containing] 3 (765 aa).

Topologically, residues 1–6 are cytoplasmic; that stretch reads MTQKTT. A helical; Signal-anchor for type II membrane protein transmembrane segment spans residues 7-27; that stretch reads LVLLALAVITIFALVCVLLAG. The Extracellular portion of the chain corresponds to 28–765; that stretch reads RSGDGGGLSQ…SHGGFAYRDN (738 aa). N-linked (GlcNAc...) asparagine glycosylation occurs at Asn137. Cys198 and Cys199 are disulfide-bonded. N-linked (GlcNAc...) asparagine glycans are attached at residues Asn232 and Asn294. Catalysis depends on Asp386, which acts as the Proton acceptor. A disulfide bond links Cys404 and Cys430. The active-site Schiff-base intermediate with substrate; via topaquinone is Tyr471. The residue at position 471 (Tyr471) is a 2',4',5'-topaquinone. 2 residues coordinate Cu(2+): His520 and His522. Asp529, Leu530, Asp531, and Glu572 together coordinate Ca(2+). N-linked (GlcNAc...) asparagine glycosylation occurs at Asn592. Glu641 contacts Ca(2+). Asn659 carries N-linked (GlcNAc...) asparagine glycosylation. A Ca(2+)-binding site is contributed by Phe663. N-linked (GlcNAc...) asparagine glycosylation occurs at Asn666. Ca(2+)-binding residues include Glu667, Asp673, and Leu674. His684 is a Cu(2+) binding site. A disulfide bond links Cys734 and Cys741.

The protein belongs to the copper/topaquinone oxidase family. Homodimer; disulfide-linked. Probably forms heterodimers with AOC2. Requires Cu(2+) as cofactor. The cofactor is Ca(2+). It depends on L-topaquinone as a cofactor. In terms of processing, topaquinone (TPQ) is generated by copper-dependent autoxidation of a specific tyrosyl residue. Post-translationally, N- and O-glycosylated.

It localises to the cell membrane. The enzyme catalyses methylamine + O2 + H2O = formaldehyde + H2O2 + NH4(+). It carries out the reaction benzylamine + O2 + H2O = benzaldehyde + H2O2 + NH4(+). It catalyses the reaction 2-phenylethylamine + O2 + H2O = 2-phenylacetaldehyde + H2O2 + NH4(+). In terms of biological role, catalyzes the oxidative deamination of primary amines to the corresponding aldehydes with the concomitant production of hydrogen peroxide and ammonia. Has a preference for the primary monoamines methylamine and benzylamine. Could also act on 2-phenylethylamine but much less efficiently. At endothelial cells surface can also function as a cell adhesion protein that participates in lymphocyte extravasation and recirculation by mediating the binding of lymphocytes to peripheral lymph node vascular endothelial cells in an L-selectin-independent fashion. The protein is Amine oxidase [copper-containing] 3 of Mus musculus (Mouse).